Reading from the N-terminus, the 449-residue chain is 23S rRNA (uracil(1939)-C(5))-methyltransferase RlmD (449 aa).

Positions 1 to 66 (MGRSRHHNKL…AKFDEAKVVE (66 aa)) constitute a TRAM domain. [4Fe-4S] cluster contacts are provided by cysteine 79, cysteine 85, cysteine 88, and cysteine 169. S-adenosyl-L-methionine is bound by residues glutamine 280, phenylalanine 309, asparagine 314, glutamate 330, asparagine 357, and aspartate 379. The Nucleophile role is filled by cysteine 405.

It belongs to the class I-like SAM-binding methyltransferase superfamily. RNA M5U methyltransferase family. RlmD subfamily.

The enzyme catalyses uridine(1939) in 23S rRNA + S-adenosyl-L-methionine = 5-methyluridine(1939) in 23S rRNA + S-adenosyl-L-homocysteine + H(+). Functionally, catalyzes the formation of 5-methyl-uridine at position 1939 (m5U1939) in 23S rRNA. In Francisella tularensis subsp. novicida (strain U112), this protein is 23S rRNA (uracil(1939)-C(5))-methyltransferase RlmD.